Here is a 185-residue protein sequence, read N- to C-terminus: ATP synthase subunit b, chloroplastic (185 aa).

Residues 7–29 (SFVYLVGHCPFAGSFAFNTDILA) form a helical membrane-spanning segment.

This sequence belongs to the ATPase B chain family. As to quaternary structure, F-type ATPases have 2 components, F(1) - the catalytic core - and F(0) - the membrane proton channel. F(1) has five subunits: alpha(3), beta(3), gamma(1), delta(1), epsilon(1). F(0) has four main subunits: a(1), b(1), b'(1) and c(10-14). The alpha and beta chains form an alternating ring which encloses part of the gamma chain. F(1) is attached to F(0) by a central stalk formed by the gamma and epsilon chains, while a peripheral stalk is formed by the delta, b and b' chains.

It is found in the plastid. It localises to the chloroplast thylakoid membrane. Functionally, f(1)F(0) ATP synthase produces ATP from ADP in the presence of a proton or sodium gradient. F-type ATPases consist of two structural domains, F(1) containing the extramembraneous catalytic core and F(0) containing the membrane proton channel, linked together by a central stalk and a peripheral stalk. During catalysis, ATP synthesis in the catalytic domain of F(1) is coupled via a rotary mechanism of the central stalk subunits to proton translocation. Its function is as follows. Component of the F(0) channel, it forms part of the peripheral stalk, linking F(1) to F(0). This Dioscorea elephantipes (Elephant's foot yam) protein is ATP synthase subunit b, chloroplastic.